The following is a 273-amino-acid chain: Large ribosomal subunit protein uL2 (273 aa).

The interval 228-273 (VDHPHGGGEGKTSGGRHPVTPWGFPTKGKKTRKNKRTSKFIVKKRK) is disordered. Basic residues predominate over residues 254–273 (KGKKTRKNKRTSKFIVKKRK).

This sequence belongs to the universal ribosomal protein uL2 family. In terms of assembly, part of the 50S ribosomal subunit. Forms a bridge to the 30S subunit in the 70S ribosome.

Its function is as follows. One of the primary rRNA binding proteins. Required for association of the 30S and 50S subunits to form the 70S ribosome, for tRNA binding and peptide bond formation. It has been suggested to have peptidyltransferase activity; this is somewhat controversial. Makes several contacts with the 16S rRNA in the 70S ribosome. This chain is Large ribosomal subunit protein uL2, found in Rickettsia peacockii (strain Rustic).